The following is a 288-amino-acid chain: Cyclin-dependent kinase 2 homolog (288 aa).

Positions 4–284 (YHGLEKIGEG…AKQALEHAYF (281 aa)) constitute a Protein kinase domain. Residues 10 to 18 (IGEGTYGVV) and Lys32 each bind ATP. Thr14 bears the Phosphothreonine mark. At Tyr15 the chain carries Phosphotyrosine. Asp125 serves as the catalytic Proton acceptor. Phosphothreonine is present on Thr158.

Belongs to the protein kinase superfamily. CMGC Ser/Thr protein kinase family. CDC2/CDKX subfamily. As to quaternary structure, may form a complex composed of at least the catalytic subunit CRK2 and a cyclin. Mg(2+) serves as cofactor.

Its subcellular location is the cytoplasm. The enzyme catalyses L-seryl-[protein] + ATP = O-phospho-L-seryl-[protein] + ADP + H(+). The catalysed reaction is L-threonyl-[protein] + ATP = O-phospho-L-threonyl-[protein] + ADP + H(+). It carries out the reaction [DNA-directed RNA polymerase] + ATP = phospho-[DNA-directed RNA polymerase] + ADP + H(+). Phosphorylation at Thr-14 or Tyr-15 inactivates the enzyme, while phosphorylation at Thr-158 activates it. Its function is as follows. Serine/threonine-protein kinase. Involved in the control of the cell cycle. Required for entry into S-phase and mitosis. Probable component of the kinase complex that phosphorylates the repetitive C-terminus of RNA polymerase II. This is Cyclin-dependent kinase 2 homolog from Plasmodium vivax.